The following is a 404-amino-acid chain: MSQQALADKPLLSRGMIAVLCAQFFSAFGDNALLFATLALIKQQLYPDWSQPILQMAFVATYIVLAPFVGQFADSFAKGRVMMVANGLKLAGALVICFGFNPFLGYSLVGVGAAAYSPAKYGILGEITSGEQLVKANGMMEASTIAAILLGSVAGGVLADWHLGVALGVCALVYAIAVVANMFIPKLAAARSGSSWRPRAMTGSFFTACLVLWRDGEARFSLAGTSLFWGAGVTLRFLLVLWVPIALGITDNATPTLLNAMVAIGIVVGAGAAARFVTLKTVKRCLPAGVLIGVAVAIFALQHSMPMAYLLLIIIGILGGFFVVPLNALLQERGKNSVGAGNAIAVQNLGENTAMLLMLGLFSVVVKLGVPVIAVGVGFGVIFALAIALLWGWQWRQQRQKTAE.

A run of 12 helical transmembrane segments spans residues 16 to 36 (MIAV…LLFA), 53 to 73 (ILQM…GQFA), 91 to 111 (AGAL…LVGV), 139 to 159 (MMEA…GVLA), 164 to 184 (GVAL…NMFI), 195 to 213 (SWRP…LVLW), 227 to 247 (LFWG…PIAL), 253 to 273 (ATPT…AGAA), 285 to 305 (CLPA…QHSM), 310 to 330 (LLLI…NALL), 350 to 370 (GENT…KLGV), and 372 to 392 (VIAV…LLWG).

This sequence belongs to the major facilitator superfamily. LplT (TC 2.A.1.42) family.

Its subcellular location is the cell inner membrane. Functionally, catalyzes the facilitated diffusion of 2-acyl-glycero-3-phosphoethanolamine (2-acyl-GPE) into the cell. This is Lysophospholipid transporter LplT from Yersinia enterocolitica serotype O:8 / biotype 1B (strain NCTC 13174 / 8081).